The sequence spans 649 residues: Transcription factor tau 95 kDa subunit (649 aa).

Residues methionine 1–alanine 21 are disordered. Polar residues predominate over residues threonine 9–aspartate 19. Residues proline 221–proline 239 form repeat 1. The tract at residues proline 221–proline 419 is 2 X repeats, Pro-rich. Positions alanine 296–lysine 300 match the Nuclear localization signal motif. Copy 2 of the repeat occupies proline 400–proline 419. The interval isoleucine 556–aspartate 612 is disordered. Composition is skewed to acidic residues over residues aspartate 560 to threonine 584 and isoleucine 594 to serine 610. Residue serine 617 is modified to Phosphoserine.

Belongs to the TFIIIC subunit 5 family. Component of the TFIIIC complex composed of TFC1, TFC3, TFC4, TFC6, TFC7 and TFC8. The subunits are organized in two globular domains, tauA and tauB, connected by a proteolysis-sensitive and flexible linker. Interacts with TFC3, TFC4 and TFC6.

Its subcellular location is the nucleus. In terms of biological role, TFIIIC mediates tRNA and 5S RNA gene activation by binding to intragenic promoter elements. Upstream of the transcription start site, TFIIIC assembles the initiation complex TFIIIB-TFIIIC-tDNA, which is sufficient for RNA polymerase III recruitment and function. Part of the tauA domain of TFIIIC that binds boxA DNA promoter sites of tRNA and similar genes. Participates in the interconnection of tauA with tauB via its contacts with TFC3 and TFC6. Serves as a scaffold critical for tauA-DNA spatial configuration and tauB-DNA stability. The protein is Transcription factor tau 95 kDa subunit (TFC1) of Saccharomyces cerevisiae (strain ATCC 204508 / S288c) (Baker's yeast).